Consider the following 408-residue polypeptide: Indian hedgehog protein (408 aa).

Residues 1–23 (MKPARLLLLLSGCALLLAPAVRC) form the signal peptide. C24 is lipidated: N-palmitoyl cysteine. Positions 90, 91, 96, 126, 127, 130, and 132 each coordinate Ca(2+). Zn(2+) is bound by residues H141, D148, and H183. G198 is lipidated: Cholesterol glycine ester.

The protein belongs to the hedgehog family. As to quaternary structure, multimer. In terms of assembly, interacts with BOC and CDON. Interacts with PTCH1. Interacts with glypican GPC3. In terms of processing, cholesterylation is required for N-product targeting to lipid rafts and multimerization. Post-translationally, the C-terminal domain displays an autoproteolysis activity and a cholesterol transferase activity. Both activities result in the cleavage of the full-length protein and covalent attachment of a cholesterol moiety to the C-terminal of the newly generated N-product. The N-product is the active species in both local and long-range signaling, whereas the C-product is degraded in the endoplasmic reticulum. N-palmitoylation by HHAT of N-product is required for indian hedgehog protein N-product multimerization and full activity. Expressed in developing midgut, lung and cartilage of developing long bones in the limb.

It is found in the cell membrane. The protein resides in the endoplasmic reticulum membrane. It localises to the golgi apparatus membrane. The protein localises to the secreted. The catalysed reaction is glycyl-L-cysteinyl-[protein] + cholesterol + H(+) = [protein]-C-terminal glycyl cholesterol ester + N-terminal L-cysteinyl-[protein]. In terms of biological role, plays a role in embryonic morphogenesis; it is involved in the regulation of endochondral skeleton formation, and the development of retinal pigment epithelium (RPE), photoreceptors and periocular tissues. Functionally, the C-terminal part of the indian hedgehog protein precursor displays an autoproteolysis and a cholesterol transferase activity. Both activities result in the cleavage of the full-length protein into two parts followed by the covalent attachment of a cholesterol moiety to the C-terminal of the newly generated N-product. Both activities occur in the endoplasmic reticulum. The dually lipidated indian hedgehog protein N-product is a morphogen which is essential for a variety of patterning events during development. Binds to the patched (PTCH1) receptor, which functions in association with smoothened (SMO), to activate the transcription of target genes. Plays a role in morphogenesis of the skeleton by coordinating growth and differentiation of the endochondral skeleton. Positively regulates PTHLH expression during endochondral bone formation preventing chondrocyte hypertrophy. In contrast, participates in normal chondrocyte proliferation in a PTHLH-independent pathway. In Gallus gallus (Chicken), this protein is Indian hedgehog protein.